Reading from the N-terminus, the 1029-residue chain is Collagen, type I, alpha 1b (1029 aa).

A disordered region spans residues 1-990 (QMSYVDHSKS…KAPDPFRGGH (990 aa)). Over residues 13–33 (PPQPGPMGPMGPRGPPGPPGS) the composition is skewed to pro residues. The span at 34 to 57 (SGPQGFTGPPGEPGEPGASGAMGS) shows a compositional bias: low complexity. Residues 67-81 (NGDDGEPGKPGRPGE) are compositionally biased toward basic and acidic residues. Composition is skewed to low complexity over residues 82-91 (RGAAGPQGAR), 120-129 (VPGVMGARGR), and 136-147 (SGARGNDGNTGP). Residues 163–182 (PGGAGAKGETGPAGGRGNEG) show a composition bias toward gly residues. Composition is skewed to low complexity over residues 199 to 223 (AGPAGSPGTDGAPGAKGSPGAAGLA), 233 to 267 (AQGAVGAPGPKGNNGDPGASGPKGEPGAKGEPGPA), and 299 to 309 (ERGAPGARGFP). Positions 310–322 (GADGGAGGKGAPG) are enriched in gly residues. Composition is skewed to low complexity over residues 323 to 351 (ERGAPGALGAQGATGESGSPGAPGAPGSK) and 429 to 465 (VGAPGPSGVAGPAGEKGEQGPAGPPGFQGLPGPQGAT). Positions 466-477 (GETGKGLGGPTG) are enriched in gly residues. The segment covering 478-497 (PRGAPGPAGNDGAKGEPGAA) has biased composition (low complexity). Composition is skewed to gly residues over residues 498 to 507 (GAPGGLGAPG) and 531 to 540 (GGKGGDGAPG). 2 stretches are compositionally biased toward low complexity: residues 571–580 (VAGPTGPRGA) and 593–620 (AGFAGPPGADGQPGAKGETGDSGPKGDA). 2 stretches are compositionally biased toward gly residues: residues 621–630 (GAPGPGGPVG) and 645–654 (GARGGAGPPG). 5 stretches are compositionally biased toward low complexity: residues 655–665 (ATGFPGPAGRV), 694–722 (ETGAAGRPGEAGAAGAPGPSGEKGSPGXD), 731–743 (PQGLAGQRGLPGQ), 830–839 (APGAVGPSGK), and 855–869 (SGPAGVRGPAGPAGA). A compositionally biased stretch (basic and acidic residues) spans 870-884 (KGDRGEAGEAGDRGG). Positions 906 to 934 (PAGASGPAGPRGPAGSNGAPGKDGMNGLP) are enriched in low complexity. The span at 952–967 (AGPPGPPGPAGPPGPP) shows a compositional bias: pro residues. Residues 999–1029 (TQKLPLLDLAPMDVGAPDQEFGVEVGPVCFL) form the Fibrillar collagen NC1 domain.

This sequence belongs to the fibrillar collagen family.

The protein localises to the secreted. It localises to the extracellular space. Its subcellular location is the extracellular matrix. The protein is Collagen, type I, alpha 1b of Epinephelus aeneus (White grouper).